Here is a 558-residue protein sequence, read N- to C-terminus: TNF receptor-associated factor 5 (558 aa).

The segment at 45-85 (CAFCHSVLHNPHQTGCGHRFCQQCIRSLRELNSVPICPVDK) adopts an RING-type zinc-finger fold. 2 consecutive TRAF-type zinc fingers follow at residues 127-181 (DHLQ…TNLQ) and 182-239 (DHEE…GNLL). The stretch at 252–302 (LVLEKNYQLEQRISDLYQSLEQKESKIQQLAETVKKFEKELKQFTQMFGRN) forms a coiled coil. A Glycyl lysine isopeptide (Lys-Gly) (interchain with G-Cter in ubiquitin) cross-link involves residue lysine 318. A coiled-coil region spans residues 340-400 (LDLRSLVDAV…EERFKQLEGA (61 aa)). Residues 345–558 (LVDAVDSVKQ…AVDLTDLEDL (214 aa)) are interaction with EIF2AK2/PKR. The MATH domain occupies 403-550 (SGKLIWKVTD…DDTLFLKVAV (148 aa)).

This sequence belongs to the TNF receptor-associated factor family. A subfamily. In terms of assembly, homotrimer. Heterotrimer with TRAF3. Associates with TNFRSF5/CD40 through interaction with TRAF3. Associates with LTBR/TNFRSF3, TNFRSF4, TNFRSF8/CD30, TNFRSF11A/RANK, TNFRSF13B/TACI, TNFRSF14, TNFRSF17, TNFRSF19/TROY, RIPK2, MAP3K14, MAP3K5, and TRAF and TNF receptor associated protein TDP2. Interacts (via C-terminus) with EIF2AK2/PKR (via the kinase catalytic domain). Ubiquitinated at Lys-318 by the SCF(FBXL2) complex, leading to its degradation by the proteasome.

The protein resides in the cytoplasm. It localises to the cytosol. Its function is as follows. Adapter protein and signal transducer that links members of the tumor necrosis factor receptor family to different signaling pathways by association with the receptor cytoplasmic domain and kinases. Mediates activation of NF-kappa-B and probably JNK. Seems to be involved in apoptosis. Plays a role in mediating activation of NF-kappa-B by EIF2AK2/PKR. This chain is TNF receptor-associated factor 5 (Traf5), found in Mus musculus (Mouse).